The primary structure comprises 569 residues: Arylsulfatase I (569 aa).

An N-terminal signal peptide occupies residues 1–23 (MHTLTGFSLVSLLSFGYLSWDWA). Residues Asp-55, Asp-56, and Cys-93 each coordinate Ca(2+). Cys-93 (nucleophile) is an active-site residue. Residue Cys-93 is modified to 3-oxoalanine (Cys). Residue Lys-147 coordinates substrate. Residue His-149 is part of the active site. His-239 contributes to the substrate binding site. Residues Asn-276 and Asn-288 are each glycosylated (N-linked (GlcNAc...) asparagine). 2 residues coordinate Ca(2+): Asp-297 and Asn-298. Position 315 (Lys-315) interacts with substrate. Asn-466 and Asn-496 each carry an N-linked (GlcNAc...) asparagine glycan. Positions 510–539 (RAHPDFNGGAWGPWASDEEEEEEEGRARSF) are disordered.

It belongs to the sulfatase family. Requires Ca(2+) as cofactor. The oxidation of Cys-93 residue to 3-oxoalanine (also known as C(alpha)-formylglycine) by SUMF1/Sulfatase-modifying factor 1, seems critical for catalytic activity. Expressed in placenta, in embryonic stem cells, fetal eyes and lens.

It localises to the secreted. The protein resides in the endoplasmic reticulum. Functionally, displays arylsulfatase activity at neutral pH, when co-expressed with SUMF1; arylsulfatase activity is measured in the secretion medium of retinal cell line, but no activity is recorded when measured in cell extracts. Lacks arylsulfatase activity. This chain is Arylsulfatase I (ARSI), found in Homo sapiens (Human).